Reading from the N-terminus, the 733-residue chain is EF-hand domain-containing family member C2 (733 aa).

DM10 domains lie at 61–168 (DKQV…TKIG), 212–354 (DRKV…RTKY), and 416–523 (ISNT…ERNS).

In terms of assembly, microtubule inner protein component of sperm flagellar doublet microtubules. As to expression, expressed in trachea multiciliated cells.

Its subcellular location is the cytoplasm. It localises to the cytoskeleton. It is found in the cilium axoneme. The protein resides in the flagellum axoneme. Its function is as follows. Microtubule inner protein (MIP) part of the dynein-decorated doublet microtubules (DMTs) in cilia axoneme, which is required for motile cilia beating. The sequence is that of EF-hand domain-containing family member C2 (EFHC2) from Bos taurus (Bovine).